Here is a 1060-residue protein sequence, read N- to C-terminus: Positive regulator of purine utilization (1060 aa).

Polar residues predominate over residues 1–15 (MLNPSTSDIHTSPTA). The tract at residues 1–48 (MLNPSTSDIHTSPTAVGNGRKRPHPIADSGSAMPSDPSAQQLPHPANE) is disordered. Positions 67 to 94 (CNRCRQRKNRCDQRLPRCQACEKAGVRC) form a DNA-binding region, zn(2)-C6 fungal-type. Disordered regions lie at residues 163–207 (EIAA…DAED), 251–282 (SVPG…TTRD), 367–391 (AEDQ…SRQY), 811–862 (VQTS…RFDM), and 877–969 (RQGS…PSGM). Basic and acidic residues-rich tracts occupy residues 170 to 182 (SNDK…KEKN), 189 to 207 (KASR…DAED), and 260 to 269 (GPSRPKERLP). The span at 272 to 282 (ATGTEGSTTRD) shows a compositional bias: polar residues. Residues 367 to 377 (AEDQKEGRDHS) are compositionally biased toward basic and acidic residues. The span at 811–831 (VQTSTSGSRQFNATQSRSRPY) shows a compositional bias: polar residues. 2 stretches are compositionally biased toward low complexity: residues 832–859 (SRQQ…PLPR) and 930–952 (PRYY…AASG).

The protein resides in the nucleus. In terms of biological role, mediates the induction of a number of unlinked genes involved in purine utilization. Binds to the consensus sequence 5'-TCGGNNNNNNCCGA-3'. The polypeptide is Positive regulator of purine utilization (uaY) (Emericella nidulans (strain FGSC A4 / ATCC 38163 / CBS 112.46 / NRRL 194 / M139) (Aspergillus nidulans)).